Reading from the N-terminus, the 391-residue chain is DNA replication and repair protein RecF (391 aa).

An ATP-binding site is contributed by 30–37 (GLNGQGKT).

This sequence belongs to the RecF family.

It localises to the cytoplasm. Functionally, the RecF protein is involved in DNA metabolism; it is required for DNA replication and normal SOS inducibility. RecF binds preferentially to single-stranded, linear DNA. It also seems to bind ATP. This is DNA replication and repair protein RecF from Kineococcus radiotolerans (strain ATCC BAA-149 / DSM 14245 / SRS30216).